Consider the following 367-residue polypeptide: Glutamate 5-kinase (367 aa).

An ATP-binding site is contributed by Lys10. The substrate site is built by Ser50, Asp137, and Asn149. Position 169-170 (Thr169–Asp170) interacts with ATP. One can recognise a PUA domain in the interval Ala275–Glu353.

This sequence belongs to the glutamate 5-kinase family.

It is found in the cytoplasm. It catalyses the reaction L-glutamate + ATP = L-glutamyl 5-phosphate + ADP. It functions in the pathway amino-acid biosynthesis; L-proline biosynthesis; L-glutamate 5-semialdehyde from L-glutamate: step 1/2. Functionally, catalyzes the transfer of a phosphate group to glutamate to form L-glutamate 5-phosphate. The chain is Glutamate 5-kinase from Salmonella paratyphi B (strain ATCC BAA-1250 / SPB7).